We begin with the raw amino-acid sequence, 205 residues long: MNIPPIYTGSIVPLDISNIDTDAIIPKEFLQKVTKTGFGKHLFNNWRYTDHNNKILNPDFNLNKPCYRESTILLTRDNFGCGSSREHAVWALLDYGIKIIISSSFSDIFYTNSFNNQLLLITLDKTTIDLFFNLIKKNKINEITVDLIENYVFFEKKRYYFYLSNFHRMCILNGLDEIDFTLQHYKKIKKYGNQIPNFFVYNSIS.

Belongs to the LeuD family. LeuD type 1 subfamily. In terms of assembly, heterodimer of LeuC and LeuD.

The catalysed reaction is (2R,3S)-3-isopropylmalate = (2S)-2-isopropylmalate. It functions in the pathway amino-acid biosynthesis; L-leucine biosynthesis; L-leucine from 3-methyl-2-oxobutanoate: step 2/4. In terms of biological role, catalyzes the isomerization between 2-isopropylmalate and 3-isopropylmalate, via the formation of 2-isopropylmaleate. This chain is 3-isopropylmalate dehydratase small subunit (leuD), found in Buchnera aphidicola subsp. Thelaxes suberi.